Consider the following 136-residue polypeptide: Histone H3, embryonic (136 aa).

Positions 1 to 43 (MARTKQTARKSTGGKAPRKQLATKAARKSAPATGGVKKPHRYR) are disordered. An N6-methylated lysine modification is found at Lys-5. The residue at position 10 (Lys-10) is an N6-acetyllysine; alternate. Lys-10 is subject to N6-methylated lysine; alternate. Ser-11 is modified (phosphoserine). N6-acetyllysine is present on residues Lys-15 and Lys-24. Residues Lys-28, Lys-37, and Lys-80 each carry the N6-methylated lysine modification.

Belongs to the histone H3 family. The nucleosome is a histone octamer containing two molecules each of H2A, H2B, H3 and H4 assembled in one H3-H4 heterotetramer and two H2A-H2B heterodimers. The octamer wraps approximately 147 bp of DNA. Acetylation is generally linked to gene activation. In terms of processing, methylation at Lys-5 is linked to gene activation. Methylation at Lys-10 is linked to gene repression.

It localises to the nucleus. The protein localises to the chromosome. Core component of nucleosome. Nucleosomes wrap and compact DNA into chromatin, limiting DNA accessibility to the cellular machineries which require DNA as a template. Histones thereby play a central role in transcription regulation, DNA repair, DNA replication and chromosomal stability. DNA accessibility is regulated via a complex set of post-translational modifications of histones, also called histone code, and nucleosome remodeling. In Paracentrotus lividus (Common sea urchin), this protein is Histone H3, embryonic.